We begin with the raw amino-acid sequence, 508 residues long: Protein ultraspiracle (508 aa).

The modulating stretch occupies residues 1 to 103 (MDNCDQDASF…NHPLSGSKHL (103 aa)). 2 disordered regions span residues 21 to 40 (PDIS…KAES) and 55 to 92 (PGSN…QQYP). Polar residues predominate over residues 24 to 35 (SQLNDSNNSSFS). Ser-35 is modified (phosphoserine). Low complexity predominate over residues 57 to 90 (SNSASSNNNSAGDAQMAQAPNSAGGSAAAAVQQQ). 2 consecutive NR C4-type zinc fingers follow at residues 104-124 (CSIC…CEGC) and 140-164 (CREN…YQKC). A DNA-binding region (nuclear receptor) is located at residues 104–169 (CSICGDRASG…RYQKCLTCGM (66 aa)). Positions 170–223 (KREAVQEERQRGARNAAGRLSASGGGSSGPGSVGGSSSQGGGGGGGVSGGMGSG) are hinge. Positions 178-228 (RQRGARNAAGRLSASGGGSSGPGSVGGSSSQGGGGGGGVSGGMGSGNGSDD) are disordered. Over residues 192–224 (SGGGSSGPGSVGGSSSQGGGGGGGVSGGMGSGN) the composition is skewed to gly residues. The 260-residue stretch at 239-498 (SIERIIEAEQ…ELFLEQLEAP (260 aa)) folds into the NR LBD domain.

It belongs to the nuclear hormone receptor family. NR2 subfamily. In terms of assembly, heterodimer of USP and ECR. Only the heterodimer is capable of high-affinity binding to ecdysone.

The protein localises to the nucleus. In terms of biological role, receptor for ecdysone. May be an important modulator of insect metamorphosis. Plays an important part in embryonic and post-embryonic development. Binds to ecdysone response elements (ECRES) such as in the promoter region of s15 chorion gene. In Drosophila melanogaster (Fruit fly), this protein is Protein ultraspiracle (usp).